A 679-amino-acid chain; its full sequence is UvrABC system protein B (679 aa).

The 384-residue stretch at 31–414 (ENLTDGLAHQ…ELEKSGTEII (384 aa)) folds into the Helicase ATP-binding domain. 44–51 (GVTGSGKT) serves as a coordination point for ATP. A Beta-hairpin motif is present at residues 97–120 (YYDYYQPEAYVPSSDTFIEKDASI). Residues 436 to 589 (QVDDLLSEAR…QIKYNEEHGI (154 aa)) form the Helicase C-terminal domain. Residues 639–674 (QQQIKKLEQQMYKFAQDLEFEKAAAIRDQLHQLREQ) form the UVR domain.

It belongs to the UvrB family. As to quaternary structure, forms a heterotetramer with UvrA during the search for lesions. Interacts with UvrC in an incision complex.

It localises to the cytoplasm. In terms of biological role, the UvrABC repair system catalyzes the recognition and processing of DNA lesions. A damage recognition complex composed of 2 UvrA and 2 UvrB subunits scans DNA for abnormalities. Upon binding of the UvrA(2)B(2) complex to a putative damaged site, the DNA wraps around one UvrB monomer. DNA wrap is dependent on ATP binding by UvrB and probably causes local melting of the DNA helix, facilitating insertion of UvrB beta-hairpin between the DNA strands. Then UvrB probes one DNA strand for the presence of a lesion. If a lesion is found the UvrA subunits dissociate and the UvrB-DNA preincision complex is formed. This complex is subsequently bound by UvrC and the second UvrB is released. If no lesion is found, the DNA wraps around the other UvrB subunit that will check the other stand for damage. This is UvrABC system protein B from Haemophilus influenzae (strain 86-028NP).